Reading from the N-terminus, the 244-residue chain is Protein A47 (244 aa).

This sequence belongs to the orthopoxvirus A47 protein family.

This chain is Protein A47, found in Variola virus.